We begin with the raw amino-acid sequence, 547 residues long: Kelch repeat and BTB domain-containing protein 2 (547 aa).

The BTB domain maps to 20-89 (CDVIITIGDG…LYNRHISSMN (70 aa)). 3 Kelch repeats span residues 295 to 342 (DIII…VIDD), 343 to 389 (TIYA…VLDQ), and 391 to 454 (IYII…SHKD).

Interacts (via BTB domain) with host CUL3.

The protein resides in the host cytoplasm. Probable substrate-specific adapter of CUL3-containing E3 ubiquitin-protein ligases which mediate the ubiquitination and subsequent proteasomal degradation of host target proteins. The sequence is that of Kelch repeat and BTB domain-containing protein 2 (KBTB2) from Bos taurus (Bovine).